Here is a 210-residue protein sequence, read N- to C-terminus: Large ribosomal subunit protein uL3 (210 aa).

The tract at residues 123–144 (KRHGQSRGPMAHGSRYHRRPGS) is disordered.

Belongs to the universal ribosomal protein uL3 family. As to quaternary structure, part of the 50S ribosomal subunit. Forms a cluster with proteins L14 and L19.

Its function is as follows. One of the primary rRNA binding proteins, it binds directly near the 3'-end of the 23S rRNA, where it nucleates assembly of the 50S subunit. The chain is Large ribosomal subunit protein uL3 from Alkaliphilus metalliredigens (strain QYMF).